A 145-amino-acid polypeptide reads, in one-letter code: Partner of bursicon (145 aa).

Positions 1–28 are cleaved as a signal peptide; it reads MKENFSIMFIHSIFLILIIFIYSNETIA. 5 disulfides stabilise this stretch: Cys-36-Cys-94, Cys-60-Cys-109, Cys-69-Cys-135, Cys-73-Cys-137, and Cys-91-Cys-140. A CTCK domain is found at 36–131; that stretch reads CETLQSEVHI…NGVMEIKIRE (96 aa).

Heterodimer of burs and pburs.

The protein resides in the secreted. Its function is as follows. Final heterodimeric neurohormone released at the end of the molting cycle, involved in the sclerotization (tanning) of the insect cuticle, melanization and wing spreading. The polypeptide is Partner of bursicon (pburs) (Apis mellifera (Honeybee)).